The following is a 510-amino-acid chain: NAD(P)H-quinone oxidoreductase subunit 2, chloroplastic (510 aa).

The next 13 membrane-spanning stretches (helical) occupy residues Leu-24–Leu-44, Trp-59–Trp-79, Ile-99–Ile-119, Met-124–Cys-144, Xaa-149–Tyr-169, Tyr-183–Gly-203, Ile-229–Phe-249, Trp-295–Ile-315, Met-323–Asp-343, Gly-347–Ala-367, Ala-395–Phe-415, Leu-418–Leu-438, and Met-484–Ile-504.

It belongs to the complex I subunit 2 family. NDH is composed of at least 16 different subunits, 5 of which are encoded in the nucleus.

The protein resides in the plastid. It localises to the chloroplast thylakoid membrane. It carries out the reaction a plastoquinone + NADH + (n+1) H(+)(in) = a plastoquinol + NAD(+) + n H(+)(out). The catalysed reaction is a plastoquinone + NADPH + (n+1) H(+)(in) = a plastoquinol + NADP(+) + n H(+)(out). Functionally, NDH shuttles electrons from NAD(P)H:plastoquinone, via FMN and iron-sulfur (Fe-S) centers, to quinones in the photosynthetic chain and possibly in a chloroplast respiratory chain. The immediate electron acceptor for the enzyme in this species is believed to be plastoquinone. Couples the redox reaction to proton translocation, and thus conserves the redox energy in a proton gradient. The chain is NAD(P)H-quinone oxidoreductase subunit 2, chloroplastic from Narcissus elegans (Daffodil).